Consider the following 341-residue polypeptide: UDP-3-O-acylglucosamine N-acyltransferase (341 aa).

Residue histidine 239 is the Proton acceptor of the active site.

It belongs to the transferase hexapeptide repeat family. LpxD subfamily. As to quaternary structure, homotrimer.

The enzyme catalyses a UDP-3-O-[(3R)-3-hydroxyacyl]-alpha-D-glucosamine + a (3R)-hydroxyacyl-[ACP] = a UDP-2-N,3-O-bis[(3R)-3-hydroxyacyl]-alpha-D-glucosamine + holo-[ACP] + H(+). The protein operates within bacterial outer membrane biogenesis; LPS lipid A biosynthesis. Its function is as follows. Catalyzes the N-acylation of UDP-3-O-acylglucosamine using 3-hydroxyacyl-ACP as the acyl donor. Is involved in the biosynthesis of lipid A, a phosphorylated glycolipid that anchors the lipopolysaccharide to the outer membrane of the cell. The protein is UDP-3-O-acylglucosamine N-acyltransferase of Photobacterium profundum (strain SS9).